We begin with the raw amino-acid sequence, 45 residues long: Large ribosomal subunit protein bL34 (45 aa).

Residues 1 to 10 are compositionally biased toward polar residues; sequence MTQRTLGGTN. Positions 1-45 are disordered; sequence MTQRTLGGTNRKQKRTSGFRARMRKSNGRKVIQARRKKGRHRLSV. Positions 11–45 are enriched in basic residues; sequence RKQKRTSGFRARMRKSNGRKVIQARRKKGRHRLSV.

This sequence belongs to the bacterial ribosomal protein bL34 family.

In Crocosphaera subtropica (strain ATCC 51142 / BH68) (Cyanothece sp. (strain ATCC 51142)), this protein is Large ribosomal subunit protein bL34.